Consider the following 57-residue polypeptide: Large ribosomal subunit protein bL32A (57 aa).

The segment at 1–22 is disordered; the sequence is MAVPARRTSKTKKRLRRTHEKL. Over residues 7-20 the composition is skewed to basic residues; it reads RTSKTKKRLRRTHE.

This sequence belongs to the bacterial ribosomal protein bL32 family.

The polypeptide is Large ribosomal subunit protein bL32A (rpmF1) (Enterococcus faecalis (strain ATCC 700802 / V583)).